A 617-amino-acid chain; its full sequence is 1-deoxy-D-xylulose-5-phosphate synthase (617 aa).

Thiamine diphosphate contacts are provided by residues H80 and 121–123; that span reads GHS. D152 lines the Mg(2+) pocket. Thiamine diphosphate is bound by residues 153–154, N181, Y277, and E360; that span reads GA. Residue N181 coordinates Mg(2+).

Belongs to the transketolase family. DXPS subfamily. As to quaternary structure, homodimer. It depends on Mg(2+) as a cofactor. Thiamine diphosphate is required as a cofactor.

The catalysed reaction is D-glyceraldehyde 3-phosphate + pyruvate + H(+) = 1-deoxy-D-xylulose 5-phosphate + CO2. It functions in the pathway metabolic intermediate biosynthesis; 1-deoxy-D-xylulose 5-phosphate biosynthesis; 1-deoxy-D-xylulose 5-phosphate from D-glyceraldehyde 3-phosphate and pyruvate: step 1/1. In terms of biological role, catalyzes the acyloin condensation reaction between C atoms 2 and 3 of pyruvate and glyceraldehyde 3-phosphate to yield 1-deoxy-D-xylulose-5-phosphate (DXP). The protein is 1-deoxy-D-xylulose-5-phosphate synthase of Blochmanniella floridana.